A 269-amino-acid chain; its full sequence is 4-hydroxy-tetrahydrodipicolinate reductase (269 aa).

Residue 11–16 coordinates NAD(+); that stretch reads GPIGRM. Lys-39 contacts NADP(+). Residues 101 to 103 and 125 to 128 each bind NAD(+); these read GTT and ASNF. Residue His-158 is the Proton donor/acceptor of the active site. His-159 lines the (S)-2,3,4,5-tetrahydrodipicolinate pocket. The active-site Proton donor is the Lys-162. 168 to 169 serves as a coordination point for (S)-2,3,4,5-tetrahydrodipicolinate; that stretch reads GT.

Belongs to the DapB family. As to quaternary structure, homotetramer.

Its subcellular location is the cytoplasm. It carries out the reaction (S)-2,3,4,5-tetrahydrodipicolinate + NAD(+) + H2O = (2S,4S)-4-hydroxy-2,3,4,5-tetrahydrodipicolinate + NADH + H(+). It catalyses the reaction (S)-2,3,4,5-tetrahydrodipicolinate + NADP(+) + H2O = (2S,4S)-4-hydroxy-2,3,4,5-tetrahydrodipicolinate + NADPH + H(+). It participates in amino-acid biosynthesis; L-lysine biosynthesis via DAP pathway; (S)-tetrahydrodipicolinate from L-aspartate: step 4/4. Catalyzes the conversion of 4-hydroxy-tetrahydrodipicolinate (HTPA) to tetrahydrodipicolinate. This chain is 4-hydroxy-tetrahydrodipicolinate reductase, found in Buchnera aphidicola subsp. Acyrthosiphon pisum (strain APS) (Acyrthosiphon pisum symbiotic bacterium).